The following is a 590-amino-acid chain: Muscarinic acetylcholine receptor M3 (590 aa).

The Extracellular portion of the chain corresponds to 1 to 67; that stretch reads MTLHNNNTTS…DPLGGHTIWQ (67 aa). N-linked (GlcNAc...) asparagine glycosylation is found at N6, N7, N15, N41, N48, and N53. A helical transmembrane segment spans residues 68–91; it reads VVFIAFLTGILALVTIIGNILVIV. At 92 to 104 the chain is on the cytoplasmic side; it reads AFKVNKQLKTVNN. The helical transmembrane segment at 105 to 130 threads the bilayer; that stretch reads YFLLSLACADLIIGVISMNLFTTYII. Residues 131–142 are Extracellular-facing; it reads MNRWALGNLACD. C141 and C221 are joined by a disulfide. The helical transmembrane segment at 143-164 threads the bilayer; sequence LWLSIDYVASNASVMNLLVISF. At 165–184 the chain is on the cytoplasmic side; it reads DRYFSITRPLTYRAKRTTKR. The helical transmembrane segment at 185–206 threads the bilayer; that stretch reads AGVMIGLAWVISFILWAPAILF. Residues 207–229 are Extracellular-facing; it reads WQYFVGKRTVPPGECFIQFLSEP. A helical transmembrane segment spans residues 230–252; sequence TITFGTAIAAFYMPVTIMTILYW. Residues 253–491 are Cytoplasmic-facing; it reads RIYKETEKRT…SLIKEKKAAQ (239 aa). The short motif at 275–281 is the Basolateral sorting signal element; sequence AEAENFV. A disordered region spans residues 324–357; sequence AEQMDQDHSSSDSWNNNDAAASLENSASSDEEDI. Low complexity predominate over residues 334-345; that stretch reads SDSWNNNDAAAS. Position 385 is a phosphoserine (S385). The helical transmembrane segment at 492 to 514 threads the bilayer; the sequence is TLSAILLAFIITWTPYNIMVLVN. The Extracellular portion of the chain corresponds to 515–526; it reads TFCDSCIPKTYW. Residues C517 and C520 are joined by a disulfide bond. The chain crosses the membrane as a helical span at residues 527–546; the sequence is NLGYWLCYINSTVNPVCYAL. Topologically, residues 547–590 are cytoplasmic; that stretch reads CNKTFRTTFKMLLLCQCDKRKRRKQQYQQRQSVIFHKRVPEQAL.

The protein belongs to the G-protein coupled receptor 1 family. Muscarinic acetylcholine receptor subfamily. CHRM3 sub-subfamily. As to quaternary structure, homodimer; the dimers can form tetramers. Interacts with NALCN. Interacts with TMEM147.

It localises to the cell membrane. Its subcellular location is the postsynaptic cell membrane. The protein localises to the basolateral cell membrane. The protein resides in the endoplasmic reticulum membrane. The muscarinic acetylcholine receptor mediates various cellular responses, including inhibition of adenylate cyclase, breakdown of phosphoinositides and modulation of potassium channels through the action of G proteins. Primary transducing effect is Pi turnover. This Sus scrofa (Pig) protein is Muscarinic acetylcholine receptor M3 (CHRM3).